Here is a 259-residue protein sequence, read N- to C-terminus: Phosphatidylglycerol--prolipoprotein diacylglyceryl transferase (259 aa).

A run of 4 helical transmembrane segments spans residues 9–29 (IIFSIGPLAISWYSLSYVIGI), 55–75 (FITYAVIGIIVGGRLGFVLLY), 92–112 (EGGMSFHGGALGGIITAYLFC), and 117–137 (INFLSLTDIIAPVVPIGLFLG). A 1,2-diacyl-sn-glycero-3-phospho-(1'-sn-glycerol) is bound at residue R138. The next 3 membrane-spanning stretches (helical) occupy residues 172–192 (QLYEAFFEGLVLFSILAYTTF), 201–221 (GLNSGIFFTFYGLFRITIEIF), and 228–248 (IGFILDSLTMGQILSVPMLLL).

It belongs to the Lgt family.

The protein localises to the cell inner membrane. The enzyme catalyses L-cysteinyl-[prolipoprotein] + a 1,2-diacyl-sn-glycero-3-phospho-(1'-sn-glycerol) = an S-1,2-diacyl-sn-glyceryl-L-cysteinyl-[prolipoprotein] + sn-glycerol 1-phosphate + H(+). The protein operates within protein modification; lipoprotein biosynthesis (diacylglyceryl transfer). Its function is as follows. Catalyzes the transfer of the diacylglyceryl group from phosphatidylglycerol to the sulfhydryl group of the N-terminal cysteine of a prolipoprotein, the first step in the formation of mature lipoproteins. This is Phosphatidylglycerol--prolipoprotein diacylglyceryl transferase from Rickettsia africae (strain ESF-5).